A 67-amino-acid polypeptide reads, in one-letter code: Phycobilisome 7.8 kDa linker polypeptide, allophycocyanin-associated, core (67 aa).

One can recognise a CpcD-like domain in the interval 1-56 (MRMFRITACVPSQTRIRTQRELQNTYFTKLVPYDNSFREQQRIMKMGGKIVKVELA).

It belongs to the phycobilisome linker protein family.

Its subcellular location is the cellular thylakoid membrane. Rod linker protein, associated with allophycocyanin. Linker polypeptides determine the state of aggregation and the location of the disk-shaped phycobiliprotein units within the phycobilisome and modulate their spectroscopic properties in order to mediate a directed and optimal energy transfer. This chain is Phycobilisome 7.8 kDa linker polypeptide, allophycocyanin-associated, core (apcC), found in Synechocystis sp. (strain ATCC 27184 / PCC 6803 / Kazusa).